The primary structure comprises 152 residues: Vasotocin-neurophysin VT 1 (152 aa).

A signal peptide spans 1 to 19 (MSDSFLPTCILCLLALSSA). Cys20 and Cys25 are joined by a disulfide. Glycine amide is present on Gly28. Cystine bridges form between Cys40/Cys84, Cys43/Cys57, Cys51/Cys74, Cys58/Cys64, Cys91/Cys103, Cys97/Cys115, and Cys104/Cys109.

It belongs to the vasopressin/oxytocin family.

It is found in the secreted. In terms of biological role, vasotocin is an antidiuretic hormone. The protein is Vasotocin-neurophysin VT 1 of Catostomus commersonii (White sucker).